We begin with the raw amino-acid sequence, 1588 residues long: Ubiquitin carboxyl-terminal hydrolase 54 (1588 aa).

The residue at position 12 (Arg-12) is an Omega-N-methylarginine. One can recognise a USP domain in the interval 31-352; sequence KGLSNEPGQN…QPLLLLYADP (322 aa). Catalysis depends on Cys-42, which acts as the Nucleophile. Zn(2+) contacts are provided by His-67, Cys-69, Cys-74, Cys-77, His-133, Cys-145, Cys-150, His-153, Cys-166, Cys-169, Cys-225, and Cys-229. Catalysis depends on His-302, which acts as the Proton acceptor. 2 stretches are compositionally biased toward basic and acidic residues: residues 380 to 391 and 424 to 434; these read DSGHLTDSECNQ and SEGETLKEKQA. 2 disordered regions span residues 380-447 and 459-519; these read DSGH…TSRL and HSRP…PTWR. Residue Ser-424 is modified to Phosphoserine. Polar residues-rich tracts occupy residues 436-445 and 459-471; these read RNASKSSSTS and HSRP…TNAA. Residues 499–512 are compositionally biased toward low complexity; that stretch reads TESTSSEARSSSSS. Residues Ser-574, Ser-613, and Ser-616 each carry the phosphoserine modification. The segment covering 601 to 616 has biased composition (low complexity); sequence ESGYESSERNSSSPVS. A disordered region spans residues 601–620; it reads ESGYESSERNSSSPVSLDAA. Residues 678 to 712 are a coiled coil; the sequence is TSKSELDELQEEVARRAQEQELRKKREKELEAAKG. Disordered stretches follow at residues 801 to 839, 856 to 895, 950 to 969, 1093 to 1172, and 1525 to 1562; these read RSLQ…EQSV, DSEL…SPPG, EDNS…TTQD, TRDV…SRRR, and GSVL…SAGE. Residues 808–825 are compositionally biased toward low complexity; that stretch reads QQQPPSQQPVQPSASLPS. Polar residues predominate over residues 878-895; the sequence is SLVSPSPAQSVSQHSPPG. Phosphoserine is present on Ser-1138. Positions 1536 to 1547 are enriched in basic and acidic residues; sequence RRIDVPPDDDGR.

The protein belongs to the peptidase C19 family.

The enzyme catalyses Thiol-dependent hydrolysis of ester, thioester, amide, peptide and isopeptide bonds formed by the C-terminal Gly of ubiquitin (a 76-residue protein attached to proteins as an intracellular targeting signal).. Its function is as follows. Deubiquitinase that specifically mediates 'Lys-63'-linked deubiquitination of substrates with a polyubiquitin chain composed of at least 3 ubiquitins. Specifically recognizes ubiquitin chain in position S2 and catalyzes cleavage of polyubiquitin within 'Lys-63'-linked chains. Not able to deubiquitinate substrates with shorter ubiquitin chains. Mediates deubiquitination of PLK4, maintaining PLK4 stability by reducing its ubiquitination-mediated degradation. The protein is Ubiquitin carboxyl-terminal hydrolase 54 (Usp54) of Rattus norvegicus (Rat).